A 186-amino-acid polypeptide reads, in one-letter code: Ribosome-recycling factor (186 aa).

Belongs to the RRF family.

The protein localises to the cytoplasm. Responsible for the release of ribosomes from messenger RNA at the termination of protein biosynthesis. May increase the efficiency of translation by recycling ribosomes from one round of translation to another. The sequence is that of Ribosome-recycling factor from Acidovorax ebreus (strain TPSY) (Diaphorobacter sp. (strain TPSY)).